The following is a 299-amino-acid chain: N-acetylneuraminate lyase (299 aa).

Aceneuramate is bound by residues Ser-45 and Ser-46. Tyr-134 serves as the catalytic Proton donor. Lys-161 acts as the Schiff-base intermediate with substrate in catalysis. Positions 163, 185, 187, and 188 each coordinate aceneuramate.

It belongs to the DapA family. NanA subfamily. In terms of assembly, homotetramer.

It localises to the cytoplasm. The enzyme catalyses aceneuramate = aldehydo-N-acetyl-D-mannosamine + pyruvate. Its pathway is amino-sugar metabolism; N-acetylneuraminate degradation; D-fructose 6-phosphate from N-acetylneuraminate: step 1/5. In terms of biological role, catalyzes the reversible aldol cleavage of N-acetylneuraminic acid (sialic acid; Neu5Ac) to form pyruvate and N-acetylmannosamine (ManNAc) via a Schiff base intermediate. This Rhizobium meliloti (strain 1021) (Ensifer meliloti) protein is N-acetylneuraminate lyase.